The following is a 721-amino-acid chain: Photosystem I P700 chlorophyll a apoprotein A1 (721 aa).

Transmembrane regions (helical) follow at residues 61–84 (VFSA…FHGA), 147–170 (LYCT…FHYH), 186–210 (LNHH…HVSL), 282–300 (TAHH…GHMY), 337–360 (WHAQ…HHMY), 376–402 (LSLF…IFMV), 424–446 (AIVS…LYIH), and 522–540 (FLVH…LILL). [4Fe-4S] cluster contacts are provided by Cys564 and Cys573. The next 2 membrane-spanning stretches (helical) occupy residues 580-601 (HVFL…HFSW) and 655-677 (LSAY…MFLF). His666 is a binding site for chlorophyll a'. Chlorophyll a-binding residues include Met674 and Tyr682. A phylloquinone-binding site is contributed by Trp683. The helical transmembrane segment at 715-721 (AVGVAHY) threads the bilayer.

It belongs to the PsaA/PsaB family. The PsaA/B heterodimer binds the P700 chlorophyll special pair and subsequent electron acceptors. PSI consists of a core antenna complex that captures photons, and an electron transfer chain that converts photonic excitation into a charge separation. The eukaryotic PSI reaction center is composed of at least 11 subunits. P700 is a chlorophyll a/chlorophyll a' dimer, A0 is one or more chlorophyll a, A1 is one or both phylloquinones and FX is a shared 4Fe-4S iron-sulfur center. is required as a cofactor.

It localises to the plastid. The protein resides in the chloroplast thylakoid membrane. It catalyses the reaction reduced [plastocyanin] + hnu + oxidized [2Fe-2S]-[ferredoxin] = oxidized [plastocyanin] + reduced [2Fe-2S]-[ferredoxin]. Its function is as follows. PsaA and PsaB bind P700, the primary electron donor of photosystem I (PSI), as well as the electron acceptors A0, A1 and FX. PSI is a plastocyanin-ferredoxin oxidoreductase, converting photonic excitation into a charge separation, which transfers an electron from the donor P700 chlorophyll pair to the spectroscopically characterized acceptors A0, A1, FX, FA and FB in turn. Oxidized P700 is reduced on the lumenal side of the thylakoid membrane by plastocyanin. The polypeptide is Photosystem I P700 chlorophyll a apoprotein A1 (Ginkgo biloba (Ginkgo)).